Reading from the N-terminus, the 444-residue chain is Tryptophan 5-hydroxylase 1 (444 aa).

Residues 19–94 (SLIFSLKNEV…NVLSVNLPDN (76 aa)) form the ACT domain. Ser58 is subject to Phosphoserine; by PKA. The L-tryptophan site is built by Tyr235, Arg257, and Thr265. Fe cation is bound by residues His272, His277, and Glu317. L-tryptophan-binding residues include Ser336 and Ile366.

This sequence belongs to the biopterin-dependent aromatic amino acid hydroxylase family. As to quaternary structure, homotetramer. Interacts with DNAJC12. It depends on Fe(2+) as a cofactor. Ubiquitinated, leading to its degradation by the proteasome. Ubiquitinated is triggered by phosphorylation. In terms of processing, phosphorylated; triggering degradation by the proteasome. In terms of tissue distribution, seems to be less widely expressed than isoform 1.

The enzyme catalyses (6R)-L-erythro-5,6,7,8-tetrahydrobiopterin + L-tryptophan + O2 = 5-hydroxy-L-tryptophan + (4aS,6R)-4a-hydroxy-L-erythro-5,6,7,8-tetrahydrobiopterin. Its pathway is aromatic compound metabolism; serotonin biosynthesis; serotonin from L-tryptophan: step 1/2. Oxidizes L-tryptophan to 5-hydroxy-l-tryptophan in the rate-determining step of serotonin biosynthesis. In Homo sapiens (Human), this protein is Tryptophan 5-hydroxylase 1 (TPH1).